We begin with the raw amino-acid sequence, 225 residues long: NAD(P)H-quinone oxidoreductase subunit K, chloroplastic (225 aa).

Residues Cys-43, Cys-44, Cys-108, and Cys-139 each contribute to the [4Fe-4S] cluster site.

The protein belongs to the complex I 20 kDa subunit family. NDH is composed of at least 16 different subunits, 5 of which are encoded in the nucleus. The cofactor is [4Fe-4S] cluster.

The protein resides in the plastid. The protein localises to the chloroplast thylakoid membrane. It catalyses the reaction a plastoquinone + NADH + (n+1) H(+)(in) = a plastoquinol + NAD(+) + n H(+)(out). It carries out the reaction a plastoquinone + NADPH + (n+1) H(+)(in) = a plastoquinol + NADP(+) + n H(+)(out). Its function is as follows. NDH shuttles electrons from NAD(P)H:plastoquinone, via FMN and iron-sulfur (Fe-S) centers, to quinones in the photosynthetic chain and possibly in a chloroplast respiratory chain. The immediate electron acceptor for the enzyme in this species is believed to be plastoquinone. Couples the redox reaction to proton translocation, and thus conserves the redox energy in a proton gradient. The protein is NAD(P)H-quinone oxidoreductase subunit K, chloroplastic of Manihot esculenta (Cassava).